The chain runs to 211 residues: ATP-dependent dethiobiotin synthetase BioD (211 aa).

An ATP-binding site is contributed by 13–18 (GVGKTV). Mg(2+) is bound at residue Thr17. Lys33 is a catalytic residue. Residues Cys47 and Glu101 each contribute to the Mg(2+) site. ATP is bound by residues 101 to 104 (EGAG), 185 to 187 (PWL), and Asn192.

This sequence belongs to the dethiobiotin synthetase family. As to quaternary structure, homodimer. The cofactor is Mg(2+).

The protein resides in the cytoplasm. The enzyme catalyses (7R,8S)-7,8-diammoniononanoate + CO2 + ATP = (4R,5S)-dethiobiotin + ADP + phosphate + 3 H(+). It participates in cofactor biosynthesis; biotin biosynthesis; biotin from 7,8-diaminononanoate: step 1/2. Its function is as follows. Catalyzes a mechanistically unusual reaction, the ATP-dependent insertion of CO2 between the N7 and N8 nitrogen atoms of 7,8-diaminopelargonic acid (DAPA, also called 7,8-diammoniononanoate) to form a ureido ring. This is ATP-dependent dethiobiotin synthetase BioD from Bradyrhizobium diazoefficiens (strain JCM 10833 / BCRC 13528 / IAM 13628 / NBRC 14792 / USDA 110).